A 326-amino-acid chain; its full sequence is Biotin synthase (326 aa).

Residues 42-266 enclose the Radical SAM core domain; sequence NEIQLAALLN…LMPKSYVRLA (225 aa). [4Fe-4S] cluster contacts are provided by C57, C61, and C64. The [2Fe-2S] cluster site is built by C101, C132, C192, and R264.

Belongs to the radical SAM superfamily. Biotin synthase family. Homodimer. [4Fe-4S] cluster is required as a cofactor. Requires [2Fe-2S] cluster as cofactor.

The enzyme catalyses (4R,5S)-dethiobiotin + (sulfur carrier)-SH + 2 reduced [2Fe-2S]-[ferredoxin] + 2 S-adenosyl-L-methionine = (sulfur carrier)-H + biotin + 2 5'-deoxyadenosine + 2 L-methionine + 2 oxidized [2Fe-2S]-[ferredoxin]. Its pathway is cofactor biosynthesis; biotin biosynthesis; biotin from 7,8-diaminononanoate: step 2/2. Functionally, catalyzes the conversion of dethiobiotin (DTB) to biotin by the insertion of a sulfur atom into dethiobiotin via a radical-based mechanism. This chain is Biotin synthase, found in Ehrlichia chaffeensis (strain ATCC CRL-10679 / Arkansas).